Consider the following 277-residue polypeptide: Small ribosomal subunit protein uS5 (277 aa).

Residues 18–40 form a disordered region; that stretch reads AAGRPSWSWQRPGERARTPGRKA. The span at 29-40 shows a compositional bias: basic and acidic residues; the sequence is PGERARTPGRKA. In terms of domain architecture, S5 DRBM spans 87-150; that stretch reads LKDEVLKIMP…ILAKLSIIPV (64 aa).

Belongs to the universal ribosomal protein uS5 family. In terms of assembly, component of the small ribosomal subunit.

Its subcellular location is the cytoplasm. It is found in the nucleus. It localises to the nucleolus. In terms of biological role, component of the ribosome, a large ribonucleoprotein complex responsible for the synthesis of proteins in the cell. The small ribosomal subunit (SSU) binds messenger RNAs (mRNAs) and translates the encoded message by selecting cognate aminoacyl-transfer RNA (tRNA) molecules. The large subunit (LSU) contains the ribosomal catalytic site termed the peptidyl transferase center (PTC), which catalyzes the formation of peptide bonds, thereby polymerizing the amino acids delivered by tRNAs into a polypeptide chain. The nascent polypeptides leave the ribosome through a tunnel in the LSU and interact with protein factors that function in enzymatic processing, targeting, and the membrane insertion of nascent chains at the exit of the ribosomal tunnel. Plays a role in the assembly and function of the 40S ribosomal subunit. Mutations in this protein affects the control of translational fidelity. Involved in nucleolar processing of pre-18S ribosomal RNA and ribosome assembly. In Ictalurus punctatus (Channel catfish), this protein is Small ribosomal subunit protein uS5 (rps2).